We begin with the raw amino-acid sequence, 434 residues long: BEN domain-containing protein 7 (434 aa).

Residues K16, K56, and K85 each participate in a glycyl lysine isopeptide (Lys-Gly) (interchain with G-Cter in SUMO2) cross-link. Disordered stretches follow at residues 96 to 151 (PQRS…SNGE) and 212 to 262 (SRKR…ERTS). The segment covering 97–150 (QRSNSSTEASQGLHSNSRGAWNELPTQSGQFSGQSGPRSRTFQTQPHISASSNG) has biased composition (polar residues). The segment covering 212-222 (SRKRNKKKKVL) has biased composition (basic residues). Residue K244 forms a Glycyl lysine isopeptide (Lys-Gly) (interchain with G-Cter in SUMO2) linkage. The BEN domain maps to 289–399 (GFDVFMPKSQ…RRLKRGSAEV (111 aa)). T326 is subject to Phosphothreonine. S330 is subject to Phosphoserine. The disordered stretch occupies residues 414–434 (TGHTFVIKRETPEDPEPGSVA).

This is BEN domain-containing protein 7 (Bend7) from Mus musculus (Mouse).